A 647-amino-acid polypeptide reads, in one-letter code: Homologous recombination OB-fold protein (647 aa).

Position 47 is a phosphoserine (Ser-47). 3 disordered regions span residues 284-361, 380-399, and 581-631; these read ARGT…GPQG, SRTP…RRFP, and SFLK…DDLD. 4 positions are modified to asymmetric dimethylarginine: Arg-285, Arg-295, Arg-329, and Arg-337. Positions 287 to 308 are enriched in polar residues; it reads TIQSSPQNRFPCQPFQSPSSWL. Residues 319–332 are compositionally biased toward low complexity; it reads TPNSSCSTPSRTSS. The segment covering 380-390 has biased composition (polar residues); the sequence is SRTPQQPTHPS. The segment covering 618–631 has biased composition (acidic residues); sequence ASPEEELPEADDLD.

Interacts with MCM8; this interaction is necessary for MCM8-MCM9 helicase complex recruitment to DNA damage sites. Interacts with RPA1; this interaction associates HROB with the RPA complex.

It localises to the nucleus. It is found in the chromosome. In terms of biological role, DNA-binding protein involved in homologous recombination that acts by recruiting the MCM8-MCM9 helicase complex to sites of DNA damage to promote DNA repair synthesis. This is Homologous recombination OB-fold protein from Homo sapiens (Human).